The sequence spans 244 residues: Nicotinamidase 1 (244 aa).

It belongs to the isochorismatase family. In terms of tissue distribution, expressed in roots and stems, and at lower levels in flowers, siliques and leaves.

It catalyses the reaction nicotinamide + H2O = nicotinate + NH4(+). It functions in the pathway cofactor biosynthesis; nicotinate biosynthesis; nicotinate from nicotinamide: step 1/1. Its function is as follows. Catalyzes the deamidation of nicotinamide, an early step in the NAD(+) salvage pathway. Prevents the accumulation of intracellular nicotinamide, a known inhibitor of poly(ADP-ribose) polymerases (PARP enzymes). The sequence is that of Nicotinamidase 1 from Arabidopsis thaliana (Mouse-ear cress).